Consider the following 354-residue polypeptide: Protein-arginine kinase (354 aa).

The Phosphagen kinase C-terminal domain occupies 24–254 (IVLSSRIRLA…QQIIQQEKMA (231 aa)). Residues 27–31 (SSRIR), His-92, Arg-125, 176–180 (RASVM), and 207–212 (RGIYGE) each bind ATP. The short motif at 337–342 (RDYRRA) is the RDXXRA motif of the pArg binding pocket involved in allosteric regulation element.

The protein belongs to the ATP:guanido phosphotransferase family.

The catalysed reaction is L-arginyl-[protein] + ATP = N(omega)-phospho-L-arginyl-[protein] + ADP + H(+). With respect to regulation, appears to be allosterically activated by the binding of pArg-containing polypeptides to the pArg-binding pocket localized in the C-terminal domain of McsB. Its function is as follows. Catalyzes the specific phosphorylation of arginine residues in a large number of proteins. Is part of the bacterial stress response system. Protein arginine phosphorylation has a physiologically important role and is involved in the regulation of many critical cellular processes, such as protein homeostasis, motility, competence, and stringent and stress responses, by regulating gene expression and protein activity. The sequence is that of Protein-arginine kinase from Bacillus cereus (strain G9842).